The chain runs to 1031 residues: Probable ATP-dependent RNA helicase DDX46 (1031 aa).

The span at 1–24 shows a compositional bias: basic residues; the sequence is MGRESRHYRKRSASRGRSGSRSRS. The segment at 1–228 is disordered; sequence MGRESRHYRK…EMEGEELDPL (228 aa). Gly-2 is lipidated: N-myristoyl glycine. The segment covering 26–49 has biased composition (basic and acidic residues); that stretch reads SPSDKRSKRGDDRRSRSRDRDRRR. Composition is skewed to basic residues over residues 50-73 and 81-103; these read ERSRSRDKRRSRSRDRKRLRRSRS and ERRRSRSRDRRRSRSRSRGRRSR. Basic and acidic residues predominate over residues 112–200; that stretch reads KKTENRSRSK…EMKQGKKWSL (89 aa). The stretch at 152–197 forms a coiled coil; the sequence is DQNKLEEEMRKRKERVEKWREEQRKKAMENIGELKKEIEEMKQGKK. A Glycyl lysine isopeptide (Lys-Gly) (interchain with G-Cter in SUMO2) cross-link involves residue Lys-186. Phosphoserine is present on Ser-199. Composition is skewed to acidic residues over residues 201 to 211 and 219 to 228; these read EDDDDDEDDPA and EMEGEELDPL. Lys-263 carries the post-translational modification N6-acetyllysine. At Tyr-294 the chain carries Phosphotyrosine. Residues Ser-295 and Ser-296 each carry the phosphoserine modification. Residue Lys-325 forms a Glycyl lysine isopeptide (Lys-Gly) (interchain with G-Cter in SUMO2) linkage. At Ser-346 the chain carries Phosphoserine. The Q motif signature appears at 372 to 400; it reads KSWVQCGISMKILNSLKKHGYEKPTPIQT. The Helicase ATP-binding domain occupies 403 to 581; that stretch reads IPAIMSGRDL…RRILSKPIEV (179 aa). 416–423 serves as a coordination point for ATP; the sequence is AKTGSGKT. Residues 529 to 532 carry the DEAD box motif; the sequence is DEAD. The 162-residue stretch at 592–753 folds into the Helicase C-terminal domain; the sequence is DVEQQVIVIE…AVPPDLEKLW (162 aa). N6-acetyllysine is present on Lys-776. Lys-779 participates in a covalent cross-link: Glycyl lysine isopeptide (Lys-Gly) (interchain with G-Cter in SUMO2). Phosphoserine is present on Ser-804. Lys-903 carries the N6-acetyllysine modification. Residues Lys-907 and Lys-915 each participate in a glycyl lysine isopeptide (Lys-Gly) (interchain with G-Cter in SUMO2) cross-link. Ser-928 is modified (phosphoserine).

The protein belongs to the DEAD box helicase family. DDX46/PRP5 subfamily. Component of the 17S U2 SnRNP complex, a ribonucleoprotein complex that contains small nuclear RNA (snRNA) U2 and a number of specific proteins. Within the 17S U2 SnRNP complex, DDX46 is part of the SF3B subcomplex, which is required for 'A' complex assembly formed by the stable binding of U2 snRNP to the branchpoint sequence in pre-mRNA. Recruited to the 17S U2 SnRNP complex following release of DDX42; DDX42 and DDX46 bind the SF3B subcomplex in a competitive manner.

It is found in the nucleus speckle. The protein resides in the nucleus. The protein localises to the cajal body. It catalyses the reaction ATP + H2O = ADP + phosphate + H(+). In terms of biological role, component of the 17S U2 SnRNP complex of the spliceosome, a large ribonucleoprotein complex that removes introns from transcribed pre-mRNAs. The 17S U2 SnRNP complex (1) directly participates in early spliceosome assembly and (2) mediates recognition of the intron branch site during pre-mRNA splicing by promoting the selection of the pre-mRNA branch-site adenosine, the nucleophile for the first step of splicing. Within the 17S U2 SnRNP complex, DDX46 plays essential roles during assembly of pre-spliceosome and proofreading of the branch site. The polypeptide is Probable ATP-dependent RNA helicase DDX46 (Homo sapiens (Human)).